The primary structure comprises 274 residues: Pyrroline-5-carboxylate reductase 3 (274 aa).

It belongs to the pyrroline-5-carboxylate reductase family. In terms of assembly, homodecamer; composed of 5 homodimers.

Its subcellular location is the cytoplasm. The catalysed reaction is L-proline + NADP(+) = (S)-1-pyrroline-5-carboxylate + NADPH + 2 H(+). The enzyme catalyses L-proline + NAD(+) = (S)-1-pyrroline-5-carboxylate + NADH + 2 H(+). It functions in the pathway amino-acid biosynthesis; L-proline biosynthesis; L-proline from L-glutamate 5-semialdehyde: step 1/1. Functionally, oxidoreductase that catalyzes the last step in proline biosynthesis, which corresponds to the reduction of pyrroline-5-carboxylate (P5C) to L-proline using NAD(P)H. Proline is synthesized from either glutamate or ornithine; both are converted to P5C, and then to proline via pyrroline-5-carboxylate reductases (PYCRs). PYCR3 is exclusively linked to the biosynthesis of proline from ornithine. The sequence is that of Pyrroline-5-carboxylate reductase 3 from Xenopus laevis (African clawed frog).